A 189-amino-acid polypeptide reads, in one-letter code: Peptidyl-tRNA hydrolase (189 aa).

TRNA is bound at residue Tyr15. The active-site Proton acceptor is the His20. TRNA contacts are provided by Phe66, Asn68, and Asn114.

This sequence belongs to the PTH family. Monomer.

The protein resides in the cytoplasm. It catalyses the reaction an N-acyl-L-alpha-aminoacyl-tRNA + H2O = an N-acyl-L-amino acid + a tRNA + H(+). In terms of biological role, hydrolyzes ribosome-free peptidyl-tRNAs (with 1 or more amino acids incorporated), which drop off the ribosome during protein synthesis, or as a result of ribosome stalling. Catalyzes the release of premature peptidyl moieties from peptidyl-tRNA molecules trapped in stalled 50S ribosomal subunits, and thus maintains levels of free tRNAs and 50S ribosomes. The polypeptide is Peptidyl-tRNA hydrolase (Streptococcus pneumoniae (strain Taiwan19F-14)).